The primary structure comprises 701 residues: Aryl hydrocarbon receptor repressor (701 aa).

Residues 1 to 38 are disordered; it reads MMIPSGECTYAGRKRRKPIQKRRLTMGTEKSNPSKRHR. Basic residues predominate over residues 12 to 24; it reads GRKRRKPIQKRRL. One can recognise a bHLH domain in the interval 25 to 78; the sequence is TMGTEKSNPSKRHRDRLNTELDHLASLLPFSPDIISKLDKLSVLRLSVSYLRVK. The PAS domain maps to 106–176; it reads PVQEGRLLLE…RQLHWAMDPP (71 aa). Disordered regions lie at residues 360–389 and 409–436; these read DPKG…QREM and TEQR…LVPH. Positions 365–375 are enriched in basic and acidic residues; the sequence is SGDREEDDQKH. Polar residues predominate over residues 414–430; that stretch reads QEGTTKLTRQPSKSEPS. A needed for transcriptional repression region spans residues 555–701; it reads ASTTSCVWLG…SKGSDGIFLP (147 aa). Residues Lys-583 and Lys-660 each participate in a glycyl lysine isopeptide (Lys-Gly) (interchain with G-Cter in SUMO2) cross-link.

Interacts with ARNT, ANKRA2, HDAC4 and HDAC5. Interacts with ARNT; forms a heterodimer with ARNT. As to expression, highly expressed in testis and weakly expressed in heart and liver. Highly expressed in small intestine and cecum in a male-dominant sexual dimorphic fashion.

The protein localises to the cytoplasm. Its subcellular location is the nucleus. In terms of biological role, mediates dioxin toxicity and is involved in regulation of cell growth and differentiation. Represses the transcription activity of AHR by competing with this transcription factor for heterodimer formation with the ARNT and subsequently binding to the xenobiotic response element (XRE) sequence present in the promoter regulatory region of variety of genes. Represses CYP1A1 by binding the XRE sequence and recruiting ANKRA2, HDAC4 and/or HDAC5. Autoregulates its expression by associating with its own XRE site. This Rattus norvegicus (Rat) protein is Aryl hydrocarbon receptor repressor (Ahrr).